Here is a 117-residue protein sequence, read N- to C-terminus: Large ribosomal subunit protein bL20 (117 aa).

It belongs to the bacterial ribosomal protein bL20 family.

Functionally, binds directly to 23S ribosomal RNA and is necessary for the in vitro assembly process of the 50S ribosomal subunit. It is not involved in the protein synthesizing functions of that subunit. This Solidesulfovibrio magneticus (strain ATCC 700980 / DSM 13731 / RS-1) (Desulfovibrio magneticus) protein is Large ribosomal subunit protein bL20.